Here is a 487-residue protein sequence, read N- to C-terminus: uncharacterized protein (487 aa).

Belongs to the UbiD family.

This is an uncharacterized protein from Aeropyrum pernix (strain ATCC 700893 / DSM 11879 / JCM 9820 / NBRC 100138 / K1).